Reading from the N-terminus, the 430-residue chain is Glutamate-1-semialdehyde 2,1-aminomutase (430 aa).

Lys-268 carries the post-translational modification N6-(pyridoxal phosphate)lysine.

Belongs to the class-III pyridoxal-phosphate-dependent aminotransferase family. HemL subfamily. As to quaternary structure, homodimer. The cofactor is pyridoxal 5'-phosphate.

It localises to the cytoplasm. It carries out the reaction (S)-4-amino-5-oxopentanoate = 5-aminolevulinate. Its pathway is porphyrin-containing compound metabolism; protoporphyrin-IX biosynthesis; 5-aminolevulinate from L-glutamyl-tRNA(Glu): step 2/2. In Bacillus subtilis (strain 168), this protein is Glutamate-1-semialdehyde 2,1-aminomutase (hemL).